A 180-amino-acid polypeptide reads, in one-letter code: Molybdopterin synthase catalytic subunit (180 aa).

Residues 123–124, Lys139, and 146–148 each bind substrate; these read HR and KLE. The segment at 161–180 is disordered; the sequence is RDGQKGVKVEGGKEGVEAKH.

Belongs to the MoaE family. MOCS2B subfamily. In terms of assembly, heterotetramer; composed of 2 small (MOCS2A) and 2 large (MOCS2B) subunits.

The protein localises to the cytoplasm. It carries out the reaction 2 [molybdopterin-synthase sulfur-carrier protein]-C-terminal-Gly-aminoethanethioate + cyclic pyranopterin phosphate + H2O = molybdopterin + 2 [molybdopterin-synthase sulfur-carrier protein]-C-terminal Gly-Gly + 2 H(+). It participates in cofactor biosynthesis; molybdopterin biosynthesis. Catalytic subunit of the molybdopterin synthase complex, a complex that catalyzes the conversion of precursor Z into molybdopterin. Acts by mediating the incorporation of 2 sulfur atoms from thiocarboxylated MOCS2A into precursor Z to generate a dithiolene group. The chain is Molybdopterin synthase catalytic subunit from Pyrenophora tritici-repentis (strain Pt-1C-BFP) (Wheat tan spot fungus).